A 253-amino-acid polypeptide reads, in one-letter code: Molybdate import ATP-binding protein MolC (253 aa).

One can recognise an ABC transporter domain in the interval 5–229 (LSVENLGFYY…NLTALFHLPM (225 aa)). Residue 38–45 (GQNGCGKS) participates in ATP binding.

The protein belongs to the ABC transporter superfamily. The complex is composed of two ATP-binding proteins (MolC), two transmembrane proteins (MolB) and a solute-binding protein (MolA).

The protein resides in the cell inner membrane. It carries out the reaction molybdate(out) + ATP + H2O = molybdate(in) + ADP + phosphate + H(+). Its activity is regulated as follows. The MolBCA complex shows a decrease in affinity in the presence of increasing concentrations of substrate and nucleotide. Functionally, part of the ABC transporter complex MolBCA involved in molybdate import. Responsible for energy coupling to the transport system. Functions as a low-affinity molybdate transporter. This Haemophilus influenzae (strain ATCC 51907 / DSM 11121 / KW20 / Rd) protein is Molybdate import ATP-binding protein MolC.